The chain runs to 205 residues: Ribosomal RNA small subunit methyltransferase G 1 (205 aa).

S-adenosyl-L-methionine is bound by residues Gly77, Leu82, 100–102, 129–130, and Arg138; these read EKS and LE.

This sequence belongs to the methyltransferase superfamily. RNA methyltransferase RsmG family.

Its subcellular location is the cytoplasm. It catalyses the reaction guanosine(527) in 16S rRNA + S-adenosyl-L-methionine = N(7)-methylguanosine(527) in 16S rRNA + S-adenosyl-L-homocysteine. In terms of biological role, specifically methylates the N7 position of guanine in position 527 of 16S rRNA. This chain is Ribosomal RNA small subunit methyltransferase G 1, found in Bdellovibrio bacteriovorus (strain ATCC 15356 / DSM 50701 / NCIMB 9529 / HD100).